We begin with the raw amino-acid sequence, 331 residues long: Phospholipase A2 inhibitor (331 aa).

Residues 1–23 (MKSSVPSLLIACLVMSLNSYTQQ) form the signal peptide. N-linked (GlcNAc...) asparagine glycosylation is present at N35. 8 LRR repeats span residues 78–101 (LPNLQELHLSNNRLKTLPSGLFRN), 103–125 (PQLHTLDLSTNHLEDLPPEIFTN), 127–149 (SSLILLPLSENQLAELHPSWFQT), 150–173 (LGELRILGLDHNQVKEIPISCFDK), 175–197 (KKLTSLDLSFNLLRRLAPEMFSG), 199–221 (DNLEKLILESNPIQCIVGRTFHW), 223–244 (PKLTVLSLKNSSLTNIMGFFQP), and 245–268 (LEQLELLDLSDNELTTMEPPVYKT). The N-linked (GlcNAc...) asparagine glycan is linked to N125. N-linked (GlcNAc...) asparagine glycosylation occurs at N232. A glycan (N-linked (GlcNAc...) asparagine) is linked at N271. One can recognise an LRRCT domain in the interval 279 to 330 (NPWACDCRLDNLLTWVNEHNIHLYSKEEIVCASPKHFKGECATSLHKSQICP).

As to quaternary structure, homotrimer.

It is found in the secreted. Functionally, inhibits the enzymatic activity of the basic phospholipase A2 (PLA2). This chain is Phospholipase A2 inhibitor, found in Gloydius brevicaudus siniticus (Chinese mamushi).